Consider the following 62-residue polypeptide: Large ribosomal subunit protein bL28 (62 aa).

Belongs to the bacterial ribosomal protein bL28 family.

This chain is Large ribosomal subunit protein bL28, found in Syntrophomonas wolfei subsp. wolfei (strain DSM 2245B / Goettingen).